A 679-amino-acid chain; its full sequence is Methionine--tRNA ligase (679 aa).

Positions 14 to 24 (PYANGSIHLGH) match the 'HIGH' region motif. Positions 145, 148, 158, and 161 each coordinate Zn(2+). The short motif at 331-335 (KMSKS) is the 'KMSKS' region element. An ATP-binding site is contributed by K334. The tRNA-binding domain maps to 577–679 (TFAAVDLRVA…SGAKPGQRIK (103 aa)).

Belongs to the class-I aminoacyl-tRNA synthetase family. MetG type 1 subfamily. Homodimer. Requires Zn(2+) as cofactor.

The protein localises to the cytoplasm. It catalyses the reaction tRNA(Met) + L-methionine + ATP = L-methionyl-tRNA(Met) + AMP + diphosphate. Functionally, is required not only for elongation of protein synthesis but also for the initiation of all mRNA translation through initiator tRNA(fMet) aminoacylation. In Pseudomonas putida (strain ATCC 47054 / DSM 6125 / CFBP 8728 / NCIMB 11950 / KT2440), this protein is Methionine--tRNA ligase.